The sequence spans 498 residues: ATP synthase subunit beta, chloroplastic (498 aa).

Thr6 carries the phosphothreonine modification. Ser13 bears the Phosphoserine mark. Residue Gly172–Thr179 participates in ATP binding.

The protein belongs to the ATPase alpha/beta chains family. In terms of assembly, F-type ATPases have 2 components, CF(1) - the catalytic core - and CF(0) - the membrane proton channel. CF(1) has five subunits: alpha(3), beta(3), gamma(1), delta(1), epsilon(1). CF(0) has four main subunits: a(1), b(1), b'(1) and c(9-12).

It localises to the plastid. The protein resides in the chloroplast thylakoid membrane. It carries out the reaction ATP + H2O + 4 H(+)(in) = ADP + phosphate + 5 H(+)(out). Functionally, produces ATP from ADP in the presence of a proton gradient across the membrane. The catalytic sites are hosted primarily by the beta subunits. The chain is ATP synthase subunit beta, chloroplastic from Crucihimalaya wallichii (Rock-cress).